The primary structure comprises 207 residues: Large ribosomal subunit protein uL4 (207 aa).

This sequence belongs to the universal ribosomal protein uL4 family. In terms of assembly, part of the 50S ribosomal subunit.

In terms of biological role, one of the primary rRNA binding proteins, this protein initially binds near the 5'-end of the 23S rRNA. It is important during the early stages of 50S assembly. It makes multiple contacts with different domains of the 23S rRNA in the assembled 50S subunit and ribosome. Its function is as follows. Forms part of the polypeptide exit tunnel. The chain is Large ribosomal subunit protein uL4 from Pelagibacter ubique (strain HTCC1062).